Here is a 292-residue protein sequence, read N- to C-terminus: Non-homologous end joining protein Ku (292 aa).

The region spanning 12–196 is the Ku domain; sequence KLSLVTCPVV…KITKDMVELA (185 aa). Positions 231-292 are disordered; the sequence is KPIKLPEPEE…RSAARQRKAG (62 aa). Basic residues predominate over residues 271 to 292; the sequence is APAHRRPAKKAHRSAARQRKAG.

This sequence belongs to the prokaryotic Ku family. As to quaternary structure, homodimer. Interacts with LigD.

Functionally, with LigD forms a non-homologous end joining (NHEJ) DNA repair enzyme, which repairs dsDNA breaks with reduced fidelity. Binds linear dsDNA with 5'- and 3'- overhangs but not closed circular dsDNA nor ssDNA. Recruits and stimulates the ligase activity of LigD. The sequence is that of Non-homologous end joining protein Ku from Bradyrhizobium sp. (strain ORS 278).